The following is a 209-amino-acid chain: Protein bli-3 (209 aa).

Polar residues predominate over residues 1-11 (MSGQGFSNADT). Residues 1 to 24 (MSGQGFSNADTGNKPADPYKQANL) form a disordered region.

This is Protein bli-3 (bli-3) from Neurospora crassa (strain ATCC 24698 / 74-OR23-1A / CBS 708.71 / DSM 1257 / FGSC 987).